Reading from the N-terminus, the 100-residue chain is Aspartyl/glutamyl-tRNA(Asn/Gln) amidotransferase subunit C (100 aa).

The protein belongs to the GatC family. As to quaternary structure, heterotrimer of A, B and C subunits.

The catalysed reaction is L-glutamyl-tRNA(Gln) + L-glutamine + ATP + H2O = L-glutaminyl-tRNA(Gln) + L-glutamate + ADP + phosphate + H(+). The enzyme catalyses L-aspartyl-tRNA(Asn) + L-glutamine + ATP + H2O = L-asparaginyl-tRNA(Asn) + L-glutamate + ADP + phosphate + 2 H(+). In terms of biological role, allows the formation of correctly charged Asn-tRNA(Asn) or Gln-tRNA(Gln) through the transamidation of misacylated Asp-tRNA(Asn) or Glu-tRNA(Gln) in organisms which lack either or both of asparaginyl-tRNA or glutaminyl-tRNA synthetases. The reaction takes place in the presence of glutamine and ATP through an activated phospho-Asp-tRNA(Asn) or phospho-Glu-tRNA(Gln). The polypeptide is Aspartyl/glutamyl-tRNA(Asn/Gln) amidotransferase subunit C (Rickettsia africae (strain ESF-5)).